The primary structure comprises 229 residues: Ribonuclease 3 (229 aa).

One can recognise an RNase III domain in the interval 5–127 (LSRLERQLGY…LIGAIYLDAG (123 aa)). Residue Glu-40 participates in Mg(2+) binding. Asp-44 is a catalytic residue. Mg(2+)-binding residues include Asp-113 and Glu-116. Residue Glu-116 is part of the active site. Residues 154–224 (DPKTRLQEFL…AAAALIALGV (71 aa)) enclose the DRBM domain.

It belongs to the ribonuclease III family. As to quaternary structure, homodimer. The cofactor is Mg(2+).

The protein resides in the cytoplasm. The enzyme catalyses Endonucleolytic cleavage to 5'-phosphomonoester.. Its function is as follows. Digests double-stranded RNA. Involved in the processing of primary rRNA transcript to yield the immediate precursors to the large and small rRNAs (23S and 16S). Processes some mRNAs, and tRNAs when they are encoded in the rRNA operon. Processes pre-crRNA and tracrRNA of type II CRISPR loci if present in the organism. The sequence is that of Ribonuclease 3 from Pseudomonas fluorescens (strain Pf0-1).